A 165-amino-acid polypeptide reads, in one-letter code: GPI-anchored protein LORELEI (165 aa).

Positions 1–20 (MELILLFFFLMALLVSLSSS) are cleaved as a signal peptide. The tract at residues 82–93 (PYVSQINDMNSD) is required for its function in pollen tube reception. The N-linked (GlcNAc...) asparagine glycan is linked to Asn137. The GPI-anchor amidated serine moiety is linked to residue Ser139. A propeptide spans 140-165 (TADSTPRFISLLISAATAVFALLVLT) (removed in mature form).

As to quaternary structure, interacts with FER. In terms of tissue distribution, expressed in leaves, buds, flowers and stems. Highest expression in the synergid cells of the female gametophyte.

The protein resides in the cell membrane. Its function is as follows. Female gametophyte-specific component of the signaling pathway required for fertilization. Required for reception of the pollen tube by the female gametophyte. Acts specifically at the synergid cell surface for pollen tube reception. Plays a role in double fertilization and early seed development. Component of the FER-regulated Rho GTPase signaling complex. Acts as a chaperone and coreceptor for FER. Required for localization of FER to the plasma membrane. The protein is GPI-anchored protein LORELEI (LRE) of Arabidopsis thaliana (Mouse-ear cress).